Here is a 119-residue protein sequence, read N- to C-terminus: Ribonuclease P protein component (119 aa).

It belongs to the RnpA family. Consists of a catalytic RNA component (M1 or rnpB) and a protein subunit.

It carries out the reaction Endonucleolytic cleavage of RNA, removing 5'-extranucleotides from tRNA precursor.. Functionally, RNaseP catalyzes the removal of the 5'-leader sequence from pre-tRNA to produce the mature 5'-terminus. It can also cleave other RNA substrates such as 4.5S RNA. The protein component plays an auxiliary but essential role in vivo by binding to the 5'-leader sequence and broadening the substrate specificity of the ribozyme. The chain is Ribonuclease P protein component from Beutenbergia cavernae (strain ATCC BAA-8 / DSM 12333 / CCUG 43141 / JCM 11478 / NBRC 16432 / NCIMB 13614 / HKI 0122).